Here is a 160-residue protein sequence, read N- to C-terminus: Phosphopantetheine adenylyltransferase (160 aa).

A substrate-binding site is contributed by serine 9. Residues 9–10 and histidine 17 contribute to the ATP site; that span reads SF. Substrate-binding residues include lysine 41, threonine 73, and arginine 87. ATP contacts are provided by residues 88–90, glutamate 98, and 123–129; these read GMR and YTFFSSS.

This sequence belongs to the bacterial CoaD family. In terms of assembly, homohexamer. Mg(2+) serves as cofactor.

The protein resides in the cytoplasm. The enzyme catalyses (R)-4'-phosphopantetheine + ATP + H(+) = 3'-dephospho-CoA + diphosphate. It participates in cofactor biosynthesis; coenzyme A biosynthesis; CoA from (R)-pantothenate: step 4/5. Its function is as follows. Reversibly transfers an adenylyl group from ATP to 4'-phosphopantetheine, yielding dephospho-CoA (dPCoA) and pyrophosphate. In Roseiflexus castenholzii (strain DSM 13941 / HLO8), this protein is Phosphopantetheine adenylyltransferase.